A 450-amino-acid chain; its full sequence is Glucose-6-phosphate isomerase (450 aa).

The active-site Proton donor is the glutamate 290. Catalysis depends on residues histidine 311 and lysine 425.

This sequence belongs to the GPI family.

Its subcellular location is the cytoplasm. The enzyme catalyses alpha-D-glucose 6-phosphate = beta-D-fructose 6-phosphate. Its pathway is carbohydrate biosynthesis; gluconeogenesis. It participates in carbohydrate degradation; glycolysis; D-glyceraldehyde 3-phosphate and glycerone phosphate from D-glucose: step 2/4. In terms of biological role, catalyzes the reversible isomerization of glucose-6-phosphate to fructose-6-phosphate. The chain is Glucose-6-phosphate isomerase from Limosilactobacillus fermentum (Lactobacillus fermentum).